The primary structure comprises 345 residues: Quinolinate synthase (345 aa).

Iminosuccinate-binding residues include H69 and S87. C132 contributes to the [4Fe-4S] cluster binding site. Residues 158-160 and S175 each bind iminosuccinate; that span reads YVN. Residue C217 coordinates [4Fe-4S] cluster. Iminosuccinate contacts are provided by residues 243–245 and T260; that span reads HPE. Position 303 (C303) interacts with [4Fe-4S] cluster.

It belongs to the quinolinate synthase family. Type 2 subfamily. It depends on [4Fe-4S] cluster as a cofactor.

The protein localises to the cytoplasm. It carries out the reaction iminosuccinate + dihydroxyacetone phosphate = quinolinate + phosphate + 2 H2O + H(+). The protein operates within cofactor biosynthesis; NAD(+) biosynthesis; quinolinate from iminoaspartate: step 1/1. Its function is as follows. Catalyzes the condensation of iminoaspartate with dihydroxyacetone phosphate to form quinolinate. This is Quinolinate synthase from Agrobacterium fabrum (strain C58 / ATCC 33970) (Agrobacterium tumefaciens (strain C58)).